The chain runs to 234 residues: Nuclear ubiquitous casein and cyclin-dependent kinase substrate 1 (234 aa).

The disordered stretch occupies residues methionine 1–aspartate 234. Tyrosine 13 carries the phosphotyrosine modification. Phosphoserine is present on residues serine 14 and serine 19. Tyrosine 26 carries the post-translational modification Phosphotyrosine. A compositionally biased stretch (basic residues) spans lysine 35–glycine 51. Phosphoserine is present on residues serine 54, serine 58, serine 61, serine 73, serine 75, and serine 79. Over residues lysine 64–glutamate 77 the composition is skewed to basic and acidic residues. The segment covering glutamine 91–alanine 100 has biased composition (low complexity). Residues valine 111–proline 124 are compositionally biased toward acidic residues. Phosphoserine is present on residues serine 113, serine 130, serine 132, and serine 144. Acidic residues predominate over residues serine 132–aspartate 145. A compositionally biased stretch (basic residues) spans serine 149–leucine 174. Position 179 is a phosphothreonine (threonine 179). A Phosphoserine modification is found at serine 181. A compositionally biased stretch (basic residues) spans glycine 185–lysine 199. Phosphothreonine is present on threonine 202. Phosphoserine is present on residues serine 204, serine 214, serine 225, and serine 231. The span at glutamate 223–aspartate 234 shows a compositional bias: acidic residues.

In terms of assembly, does not interact with RAD51. Phosphorylated in an ATM-dependent manner in response to DNA damage. Phosphorylated by CDK1 and casein kinase.

The protein resides in the nucleus. It is found in the chromosome. Functionally, chromatin-associated protein involved in DNA repair by promoting homologous recombination (HR). Binds double-stranded DNA (dsDNA) and secondary DNA structures, such as D-loop structures, but with less affinity than RAD51AP1. In Mus musculus (Mouse), this protein is Nuclear ubiquitous casein and cyclin-dependent kinase substrate 1 (Nucks1).